A 214-amino-acid chain; its full sequence is Thymidylate kinase (214 aa).

11 to 18 contacts ATP; sequence GPEGAGKT.

It belongs to the thymidylate kinase family.

The enzyme catalyses dTMP + ATP = dTDP + ADP. Phosphorylation of dTMP to form dTDP in both de novo and salvage pathways of dTTP synthesis. This chain is Thymidylate kinase, found in Leuconostoc citreum (strain KM20).